We begin with the raw amino-acid sequence, 161 residues long: 2-C-methyl-D-erythritol 2,4-cyclodiphosphate synthase (161 aa).

The a divalent metal cation site is built by Asp-10 and His-12. 4-CDP-2-C-methyl-D-erythritol 2-phosphate-binding positions include 10-12 and 36-37; these read DVH and HS. Position 44 (His-44) interacts with a divalent metal cation. Residues 58–60, 63–67, and Arg-144 each bind 4-CDP-2-C-methyl-D-erythritol 2-phosphate; these read DIG and FSDTD.

This sequence belongs to the IspF family. Homotrimer. A divalent metal cation serves as cofactor.

It catalyses the reaction 4-CDP-2-C-methyl-D-erythritol 2-phosphate = 2-C-methyl-D-erythritol 2,4-cyclic diphosphate + CMP. It participates in isoprenoid biosynthesis; isopentenyl diphosphate biosynthesis via DXP pathway; isopentenyl diphosphate from 1-deoxy-D-xylulose 5-phosphate: step 4/6. In terms of biological role, involved in the biosynthesis of isopentenyl diphosphate (IPP) and dimethylallyl diphosphate (DMAPP), two major building blocks of isoprenoid compounds. Catalyzes the conversion of 4-diphosphocytidyl-2-C-methyl-D-erythritol 2-phosphate (CDP-ME2P) to 2-C-methyl-D-erythritol 2,4-cyclodiphosphate (ME-CPP) with a corresponding release of cytidine 5-monophosphate (CMP). The sequence is that of 2-C-methyl-D-erythritol 2,4-cyclodiphosphate synthase from Burkholderia ambifaria (strain ATCC BAA-244 / DSM 16087 / CCUG 44356 / LMG 19182 / AMMD) (Burkholderia cepacia (strain AMMD)).